Reading from the N-terminus, the 1384-residue chain is MREALFSQDGWGCQHVNQDTNWEVPSSPEPANKDAPGPPMWKPSINNGTDLWESNLRNGGQPAAQQVPKPSWGHTPSSNLGGTWGEDDDGADSSSVWTGGAVSNAGSGAAVGVNQAGVNVGPGGVVSSGGPQWGQGVVGVGLGSTGGNGSSNITGSSGVATGSSGNSSNAGNGWGDPREIRPLGVGGSMDIRNVEHRGGNGSGATSSDPRDIRMIDPRDPIRGDPRGISGRLNGTSEMWGHHPQMSHNQLQGINKMVGQSVATASTSVGTSGSGIGPGGPGPSTVSGNIPTQWGPAQPVSVGVSGPKDMSKQISGWEEPSPPPQRRSIPNYDDGTSLWGQQTRVPAASGHWKDMTDSIGRSSHLMRGQSQTGGIGIAGVGNSNVPVGANPSNPISSVVGPQARIPSVGGVQHKPDGGAMWVHSGNVGGRNNVAAVTTWGDDTHSVNVGAPSSGSVSSNNWVDDKSNSTLAQNSWSDPAPVGVSWGNKQSKPPSNSASSGWSTAAGVVDGVDLGSEWNTHGGIIGKSQQQQKLAGLNVGMVNVINAEIIKQSKQYRILVENGFKKEDVERALVIANMNIEEAADMLRANSSLSMDGWRRHDESLGSYADHNSSTSSGGFAGRYPVNSGQPSMSFPHNNLMNNMGGTAVTGGNNNTNMTALQVQKYLNQGQHGVAVGPQAVGNSSAVSVGFGQNTSNAAVAGAASVNIAANTNNQPSGQQIRMLGQQIQLAIHSGFISSQILTQPLTQTTLNLLNQLLSNIKHLQAAQQSLTRGGNVNPMAVNVAISKYKQQIQNLQNQINAQQAVYVKQQNMQPTSQQQQPQQQQLPSVHLSNSGNDYLRGHDAINNLQSNFSELNINKPSGYQGASNQQSRLNQWKLPVLDKEINSDSTEFSRAPGATKQNLTANTSNINSLGLQNDSTWSTGRSIGDGWPDPSSDNENKDWSVAQPTSAATAYTDLVQEFEPGKPWKGSQIKSIEDDPSITPGSVARSPLSINSTPKDADIFANTGKNSPTDLPPLSLSSSTWSFNPNQNYPSHSWSDNSQQCTATSELWTSPLNKSSSRGPPPGLTANSNKSANSNASTPTTITGGANGWLQPRSGGVQTTNTNWTGGNTTWGSSWLLLKNLTAQIDGPTLRTLCMQHGPLVSFHPYLNQGIALCKYTTREEANKAQMALNNCVLANTTIFAESPSENEVQSIMQHLPQTPSSTSSSGTSGGNVGGVGTSANNANSGSAACLSGNNSGNGNGSASGAGSGNNGNSSCNNSAAGGGSSSNNTITTVANSNLVGSSGSVSNSSGVTANSSTVSVVSCTASGNSINGAGTANSSGSKSSANNLASGQSSASNLTNSTNSTWRQTSQNQALQSQSRPSGREADFDYISLVYSIVDD.

4 disordered regions span residues 1–99 (MREA…VWTG), 148–227 (NGSS…DPRG), 263–335 (TAST…DDGT), and 447–501 (VGAP…SGWS). A required for interaction with AGO1 region spans residues 1 to 205 (MREALFSQDG…HRGGNGSGAT (205 aa)). Sufficient for miRNA-mediated silencing regions lie at residues 1–605 (MREA…SLGS) and 605–830 (SYAD…SVHL). Residues 15-24 (HVNQDTNWEV) are compositionally biased toward polar residues. The span at 150–171 (SSNITGSSGVATGSSGNSSNAG) shows a compositional bias: low complexity. The tract at residues 205-490 (TSSDPRDIRM…GVSWGNKQSK (286 aa)) is minimal N-terminal region required for miRNA-mediated silencing. The span at 208-225 (DPRDIRMIDPRDPIRGDP) shows a compositional bias: basic and acidic residues. Polar residues-rich tracts occupy residues 449–475 (APSS…NSWS) and 485–501 (GNKQ…SGWS). The region spanning 547 to 588 (IIKQSKQYRILVENGFKKEDVERALVIANMNIEEAADMLRAN) is the UBA domain. Disordered stretches follow at residues 607-626 (ADHN…PVNS), 809-841 (QNMQ…LRGH), 889-942 (TEFS…NKDW), 962-1022 (EPGK…LSSS), 1052-1102 (TSPL…GVQT), 1188-1221 (SENE…GVGT), and 1318-1368 (GTAN…PSGR). Residues 809–826 (QNMQPTSQQQQPQQQQLP) are compositionally biased toward low complexity. Positions 862 to 1115 (YQGASNQQSR…NWTGGNTTWG (254 aa)) are not required for interaction with AGO1 or miRNAs or for localization to P-bodies but necessary for miRNA-mediated silencing and for interaction with pAbp. Residues 898–924 (TKQNLTANTSNINSLGLQNDSTWSTGR) are compositionally biased toward polar residues. Residues 940–1215 (KDWSVAQPTS…TSSSGTSGGN (276 aa)) are sufficient for miRNA-mediated silencing. Residues 1010-1022 (SPTDLPPLSLSSS) show a composition bias toward low complexity. Residues 1052–1061 (TSPLNKSSSR) are compositionally biased toward polar residues. The span at 1068-1084 (TANSNKSANSNASTPTT) shows a compositional bias: low complexity. In terms of domain architecture, RRM spans 1117–1189 (SWLLLKNLTA…TTIFAESPSE (73 aa)). The segment covering 1188-1203 (SENEVQSIMQHLPQTP) has biased composition (polar residues). Residues 1200–1384 (PQTPSSTSSS…ISLVYSIVDD (185 aa)) are not required for interaction with AGO1 or miRNAs or for localization to P-bodies but necessary for miRNA-mediated silencing, dissociation from AGO1 and miRNAs and interaction with pAbp. A compositionally biased stretch (gly residues) spans 1211–1220 (TSGGNVGGVG). Low complexity predominate over residues 1318 to 1349 (GTANSSGSKSSANNLASGQSSASNLTNSTNST). Positions 1350 to 1365 (WRQTSQNQALQSQSRP) are enriched in polar residues.

The protein belongs to the GW182 family. As to quaternary structure, component of the miRNA-directed RNA-induced silencing complex (miRISC), composed of at least AGO1 and gw, which bind mature miRNAs and targets the selective destruction of homologous RNAs. Interacts (via N-terminal region) with AGO1 (via Piwi domain); the interaction is essential for localization of AGO1 in P-bodies and for miRNA-mediated silencing. Interacts with pAbp/PABPC1; this interaction interferes with the binding of pAbp to eIF4G and is required for miRNA-mediated silencing. Interacts with CCR4-NOT complex members Not1, Rga/NOT2, twin/CCR4, Pop2 and NOT3/5 and with PAN complex members CG8232/PAN2 and CG11486/PAN3.

The protein localises to the cytoplasm. It is found in the P-body. In terms of biological role, required for gene silencing mediated by micro-RNAs (miRNAs). Silences both polyadenylated and deadenylated mRNAs. Required for miRNA-mediated translational repression and mRNA decay. Not required for miRNA target recognition. Necessary to initiate but not to maintain silencing. Promotes mRNA deadenylation through the recruitment of the CCR4-NOT and PAN complexes and promotes decapping by the DCP1-DCP2 complex. Dissociates from silenced mRNAs after deadenylation. Required for completion of nuclear divisions during early embryonic development. This chain is Protein Gawky, found in Drosophila melanogaster (Fruit fly).